A 118-amino-acid chain; its full sequence is Phosphoribosyl-AMP cyclohydrolase (118 aa).

Residue D85 coordinates Mg(2+). C86 serves as a coordination point for Zn(2+). 2 residues coordinate Mg(2+): D87 and D89. Residues C102 and C109 each contribute to the Zn(2+) site.

It belongs to the PRA-CH family. Homodimer. It depends on Mg(2+) as a cofactor. Zn(2+) is required as a cofactor.

Its subcellular location is the cytoplasm. It carries out the reaction 1-(5-phospho-beta-D-ribosyl)-5'-AMP + H2O = 1-(5-phospho-beta-D-ribosyl)-5-[(5-phospho-beta-D-ribosylamino)methylideneamino]imidazole-4-carboxamide. The protein operates within amino-acid biosynthesis; L-histidine biosynthesis; L-histidine from 5-phospho-alpha-D-ribose 1-diphosphate: step 3/9. Functionally, catalyzes the hydrolysis of the adenine ring of phosphoribosyl-AMP. This is Phosphoribosyl-AMP cyclohydrolase from Sulfurisphaera tokodaii (strain DSM 16993 / JCM 10545 / NBRC 100140 / 7) (Sulfolobus tokodaii).